Reading from the N-terminus, the 29-residue chain is Cytochrome b6-f complex subunit 8 (29 aa).

The chain crosses the membrane as a helical span at residues 3–23 (TVSLAWAALMVVFTFSLSLVV).

The protein belongs to the PetN family. In terms of assembly, the 4 large subunits of the cytochrome b6-f complex are cytochrome b6, subunit IV (17 kDa polypeptide, PetD), cytochrome f and the Rieske protein, while the 4 small subunits are PetG, PetL, PetM and PetN. The complex functions as a dimer.

The protein resides in the plastid. It localises to the chloroplast thylakoid membrane. Component of the cytochrome b6-f complex, which mediates electron transfer between photosystem II (PSII) and photosystem I (PSI), cyclic electron flow around PSI, and state transitions. This chain is Cytochrome b6-f complex subunit 8, found in Chloranthus spicatus (Chulantree).